Here is a 221-residue protein sequence, read N- to C-terminus: Glutathione S-transferase class-mu 26 kDa isozyme 1 (221 aa).

One can recognise a GST N-terminal domain in the interval 2-82; the sequence is PAKLGYWKIR…YIADKHGMIG (81 aa). Glutathione-binding positions include 7–8, 40–44, 53–54, and 66–67; these read YW, WFSKK, NL, and QS. The region spanning 84–202 is the GST C-terminal domain; the sequence is TPEERARVSM…ESNRFIKWPL (119 aa). Y110 serves as a coordination point for substrate.

It belongs to the GST superfamily. Mu family. As to quaternary structure, homodimer.

The catalysed reaction is RX + glutathione = an S-substituted glutathione + a halide anion + H(+). Conjugation of reduced glutathione to a wide number of exogenous and endogenous hydrophobic electrophiles. In terms of biological role, GST isoenzymes appear to play a central role in the parasite detoxification system. Other functions are also suspected including a role in increasing the solubility of haematin in the parasite gut. In Fasciola hepatica (Liver fluke), this protein is Glutathione S-transferase class-mu 26 kDa isozyme 1.